The following is a 314-amino-acid chain: Mycothiol acetyltransferase (314 aa).

N-acetyltransferase domains lie at 18 to 156 (ATIR…RPLA) and 168 to 314 (IRIA…MYQL). Glutamate 38 serves as a coordination point for 1D-myo-inositol 2-(L-cysteinylamino)-2-deoxy-alpha-D-glucopyranoside. Residue 92 to 94 (VVV) coordinates acetyl-CoA. Glutamate 195, lysine 234, and glutamate 248 together coordinate 1D-myo-inositol 2-(L-cysteinylamino)-2-deoxy-alpha-D-glucopyranoside. Residues 252 to 254 (VGL) and 259 to 265 (QGHGLGR) contribute to the acetyl-CoA site. Residue tyrosine 286 coordinates 1D-myo-inositol 2-(L-cysteinylamino)-2-deoxy-alpha-D-glucopyranoside.

This sequence belongs to the acetyltransferase family. MshD subfamily. In terms of assembly, monomer.

The enzyme catalyses 1D-myo-inositol 2-(L-cysteinylamino)-2-deoxy-alpha-D-glucopyranoside + acetyl-CoA = mycothiol + CoA + H(+). Its function is as follows. Catalyzes the transfer of acetyl from acetyl-CoA to desacetylmycothiol (Cys-GlcN-Ins) to form mycothiol. This Catenulispora acidiphila (strain DSM 44928 / JCM 14897 / NBRC 102108 / NRRL B-24433 / ID139908) protein is Mycothiol acetyltransferase.